A 298-amino-acid chain; its full sequence is Nucleotide-binding protein MAV_3359 (298 aa).

18-25 (GLSGAGRG) lines the ATP pocket. 69–72 (DVRS) serves as a coordination point for GTP.

This sequence belongs to the RapZ-like family.

Its function is as follows. Displays ATPase and GTPase activities. This chain is Nucleotide-binding protein MAV_3359, found in Mycobacterium avium (strain 104).